The chain runs to 238 residues: 3-dehydroquinate dehydratase (238 aa).

3-dehydroquinate-binding positions include 35–37 (ELR) and arginine 68. Histidine 131 serves as the catalytic Proton donor/acceptor. Residue lysine 158 is the Schiff-base intermediate with substrate of the active site. 3-dehydroquinate is bound by residues arginine 200 and glutamine 223.

It belongs to the type-I 3-dehydroquinase family. As to quaternary structure, homodimer.

The enzyme catalyses 3-dehydroquinate = 3-dehydroshikimate + H2O. Its pathway is metabolic intermediate biosynthesis; chorismate biosynthesis; chorismate from D-erythrose 4-phosphate and phosphoenolpyruvate: step 3/7. Its function is as follows. Involved in the third step of the chorismate pathway, which leads to the biosynthesis of aromatic amino acids. Catalyzes the cis-dehydration of 3-dehydroquinate (DHQ) and introduces the first double bond of the aromatic ring to yield 3-dehydroshikimate. In Staphylococcus epidermidis (strain ATCC 35984 / DSM 28319 / BCRC 17069 / CCUG 31568 / BM 3577 / RP62A), this protein is 3-dehydroquinate dehydratase.